The sequence spans 238 residues: Peroxisomal coenzyme A diphosphatase NUDT7 (238 aa).

Lys20 carries the N6-succinyllysine modification. The region spanning 37–172 (YNKYSVLLPL…VTRLGHRFIN (136 aa)) is the Nudix hydrolase domain. The Nudix box signature appears at 77 to 98 (KRDPTDMDDAATALREAQEEVG). Residues Glu92 and Glu96 each coordinate Mg(2+). The short motif at 236-238 (SRL) is the Microbody targeting signal element.

The protein belongs to the Nudix hydrolase family. PCD1 subfamily. As to quaternary structure, monomer. Mn(2+) serves as cofactor. Requires Mg(2+) as cofactor. As to expression, expressed in liver, kidney, pancreas, pituitary, small intestine, spleen, heart and placenta. Weakly expressed in brain.

It is found in the peroxisome. The catalysed reaction is hexanoyl-CoA + H2O = hexanoyl-4'-phosphopantetheine + adenosine 3',5'-bisphosphate + 2 H(+). The enzyme catalyses octanoyl-CoA + H2O = S-octanoyl-4'-phosphopantetheine + adenosine 3',5'-bisphosphate + 2 H(+). It catalyses the reaction butanoyl-CoA + H2O = S-butanoyl-4'-phosphopantetheine + adenosine 3',5'-bisphosphate + 2 H(+). It carries out the reaction decanoyl-CoA + H2O = decanoyl-4'-phosphopantetheine + adenosine 3',5'-bisphosphate + 2 H(+). The catalysed reaction is dodecanoyl-CoA + H2O = S-dodecanoyl-4'-phosphopantetheine + adenosine 3',5'-bisphosphate + 2 H(+). The enzyme catalyses tetradecanoyl-CoA + H2O = tetradecanoyl-4'-phosphopantetheine + adenosine 3',5'-bisphosphate + 2 H(+). It catalyses the reaction choloyl-CoA + H2O = S-choloyl-4'-phosphopantetheine + adenosine 3',5'-bisphosphate + 2 H(+). It carries out the reaction 3alpha,7alpha,12alpha-trihydroxy-5beta-cholestan-26-oyl-CoA + H2O = 3alpha,7alpha,12alpha-trihydroxy-5beta-cholestan-26-oyl-4'-phosphopantetheine + adenosine 3',5'-bisphosphate + 2 H(+). The catalysed reaction is acetyl-CoA + H2O = S-acetyl-4'-phosphopantetheine + adenosine 3',5'-bisphosphate + 2 H(+). The enzyme catalyses CoA + H2O = (R)-4'-phosphopantetheine + adenosine 3',5'-bisphosphate + 2 H(+). It catalyses the reaction propanoyl-CoA + H2O = propanoyl-4'-phosphopantetheine + adenosine 3',5'-bisphosphate + 2 H(+). It carries out the reaction malonyl-CoA + H2O = malonyl-4'-phosphopantetheine + adenosine 3',5'-bisphosphate + 2 H(+). The catalysed reaction is succinyl-CoA + H2O = succinyl-4'-phosphopantetheine + adenosine 3',5'-bisphosphate + 2 H(+). The enzyme catalyses a 5'-end CoA-ribonucleoside in mRNA + H2O = a 5'-end phospho-adenosine-phospho-ribonucleoside in mRNA + (R)-4'-phosphopantetheine + 2 H(+). Its activity is regulated as follows. Inhibited by fluoride. In terms of biological role, fatty acyl-coenzyme A (CoA) diphosphatase that hydrolyzes fatty acyl-CoA to yield acyl-4'-phosphopantetheine and adenosine 3',5'-bisphosphate. Cleaves CoA, CoA esters and oxidized CoA with similar efficiencies. Preferentially hydrolyzes medium-chain acyl-CoAs and bile acid-CoAs. Has no activity toward NDP-sugars, CDP-alcohols, (deoxy)nucleoside 5'-triphosphates, nucleoside 5'-di or monophosphates, diadenosine polyphosphates, NAD, NADH, NADP, NADPH or thymidine-5'-monophospho-p-nitrophenyl ester. May be required to eliminate oxidized CoA from peroxisomes, or regulate CoA and acyl-CoA levels in this organelle in response to metabolic demand. Does not play a role in U8 snoRNA decapping activity. Binds U8 snoRNA. Exhibits decapping activity towards dpCoA-capped RNAs in vitro. The protein is Peroxisomal coenzyme A diphosphatase NUDT7 of Homo sapiens (Human).